Here is a 308-residue protein sequence, read N- to C-terminus: Maspardin (308 aa).

The 73-residue stretch at 87-159 (FCDGFRKLLD…NSFWLMPAFM (73 aa)) folds into the AB hydrolase-1 domain. Serine 304 is modified (phosphoserine).

It belongs to the AB hydrolase superfamily. Interacts with CD4. Interacts with ALDH16A1.

It is found in the cytoplasm. Its function is as follows. May play a role as a negative regulatory factor in CD4-dependent T-cell activation. In Pongo abelii (Sumatran orangutan), this protein is Maspardin (SPG21).